Here is a 529-residue protein sequence, read N- to C-terminus: Listeriolysin O (529 aa).

A signal peptide spans 1-24; that stretch reads MKKIMLVFITLILVSLPIAQQTEA. The segment at 35-54 is disordered; sequence SISSMAPPASPPASPKTPIE. 4 beta stranded membrane-spanning segments follow: residues 214-227, 234-243, 312-321, and 329-341; these read ESQLIAKFGTAFKA, VNFGAISEGK, STKVKAAFDA, and SGDVELTNIIKNS. Residues 483–493 carry the Conserved undecapeptide motif; sequence ECTGLAWEWWR. A Cholesterol binding motif is present at residues 515–516; it reads TL.

The protein belongs to the cholesterol-dependent cytolysin family. As to quaternary structure, homooligomeric pore complex of 35 to 50 subunits; when inserted in the host membrane.

It localises to the secreted. The protein localises to the host membrane. The protein resides in the host cell membrane. Its activity is regulated as follows. Activity of listeriolysin O is regulated on multiple levels. It should be high in the phagosome, thereby allowing escape of the bacteria from the phagosomal compartment. Then, once inside the host cytosol, the activity must be controlled to prevent lysis of the host plasma membrane and loss of the intracellular environment. Functionally, a cholesterol-dependent toxin that causes cytolysis by forming pores in cholesterol containing host membranes. After binding to target membranes, the protein undergoes a major conformation change, leading to its insertion in the host membrane and formation of an oligomeric pore complex. Cholesterol is required for binding to host membranes, membrane insertion and pore formation; cholesterol binding is mediated by a Thr-Leu pair in the C-terminus. Acts as a major virulence factor required for the escape of bacteria from phagosomal vacuoles and entry into the host cytosol. Can be reversibly inactivated by oxidation. The chain is Listeriolysin O (hly) from Listeria monocytogenes serotype 1/2a (strain 08-5578).